The following is a 180-amino-acid chain: MMLKSLTMENVKVVTGEIEKLRERIEKVKETLDLIPKEIEELERELERVRQEIAKKEDELIAVAREIRHKEHEFTEVKQKIAYHRKYLERADSPREYERLLQERQKLIERAYKLSEEIYELRRKYEALREEEEKLHQKEDEIEEKIHKLKKEYRALLNELKGLIEELNRKAREIIEKYGL.

Coiled coils occupy residues 3 to 82 and 95 to 179; these read LKSL…QKIA and REYE…EKYG.

This is an uncharacterized protein from Aquifex aeolicus (strain VF5).